The sequence spans 376 residues: Putative 12-oxophytodienoate reductase 2 (376 aa).

Residues 31-33 (PLT), Ala64, and Gln106 contribute to the FMN site. 178–181 (HGAH) provides a ligand contact to substrate. Residue Tyr183 is the Proton donor of the active site. Residues Arg230, Gly301, and 322–323 (GR) contribute to the FMN site.

It belongs to the NADH:flavin oxidoreductase/NADH oxidase family. Requires FMN as cofactor.

Putative oxophytodienoate reductase that may be involved in the biosynthesis or metabolism of oxylipin signaling molecules. The polypeptide is Putative 12-oxophytodienoate reductase 2 (OPR2) (Oryza sativa subsp. japonica (Rice)).